The following is a 788-amino-acid chain: Integrin beta-6 (788 aa).

An N-terminal signal peptide occupies residues 1-21 (MGIELLCLFFLFLGRNDHVQG). In terms of domain architecture, PSI spans 22 to 71 (GCALGGAETCEDCLLIGPQCAWCAQENFTHPSGVGERCDTPANLLAKGCQ). Residues 22 to 709 (GCALGGAETC…KDCPKPPNIP (688 aa)) are Extracellular-facing. Cystine bridges form between Cys23–Cys41, Cys31–Cys454, Cys34–Cys59, Cys44–Cys70, Cys197–Cys204, Cys252–Cys293, Cys394–Cys406, Cys426–Cys452, Cys456–Cys476, Cys467–Cys479, Cys481–Cys490, Cys492–Cys519, Cys502–Cys517, Cys511–Cys522, Cys524–Cys537, Cys539–Cys560, Cys544–Cys558, Cys552–Cys563, and Cys565–Cys574. Asn48 and Asn97 each carry an N-linked (GlcNAc...) asparagine glycan. The 241-residue stretch at 131–371 (YPVDLYYLMD…QLIISAYEEL (241 aa)) folds into the VWFA domain. Mg(2+) is bound by residues Asp140, Ser142, and Ser144. Ser144, Asp147, Asp148, and Glu179 together coordinate Ca(2+). The Ca(2+) site is built by Asn235, Asp237, Pro239, and Glu240. Glu240 is a binding site for Mg(2+). Residue Asn260 is glycosylated (N-linked (GlcNAc...) asparagine). Residues Asp271 and Lys355 each contribute to the Ca(2+) site. Residues Asn387 and Asn396 are each glycosylated (N-linked (GlcNAc...) asparagine). 4 I-EGF domains span residues 456–491 (CQKE…PRCE), 492–538 (CGED…PYCQ), 539–575 (CDNF…EYCN), and 576–615 (CTTS…PTCE). N-linked (GlcNAc...) asparagine glycans are attached at residues Asn463 and Asn471. N-linked (GlcNAc...) asparagine glycosylation occurs at Asn541. The N-linked (GlcNAc...) asparagine glycan is linked to Asn575. Disulfide bonds link Cys576/Cys599, Cys583/Cys597, Cys591/Cys602, Cys604/Cys614, Cys617/Cys620, Cys624/Cys670, Cys630/Cys649, Cys633/Cys645, and Cys678/Cys702. The helical transmembrane segment at 710–730 (MIMLGVSLAILLIGVVLLCIW) threads the bilayer. Positions 731–758 (KLLVSFHDRKEVAKFEAERSKAKWQTGT) are interaction with HAX1. Topologically, residues 731–788 (KLLVSFHDRKEVAKFEAERSKAKWQTGTNPLYRGSTSTFKNVTYKHREKQKVDLSTDC) are cytoplasmic.

This sequence belongs to the integrin beta chain family. In terms of assembly, heterodimer of an alpha and a beta subunit. Interacts with FLNB. Interacts with HAX1. ITGAV:ITGB6 interacts with FBN1. ITGAV:ITGB6 interacts with TGFB1. (Microbial infection) Integrin ITGAV:ITGB6 interacts with coxsackievirus A9, coxsackievirus B1 capsid proteins. As to quaternary structure, (Microbial infection) Integrin ITGAV:ITGB6 interacts with herpes simplex virus-1/HHV-1 gH:gL proteins.

Its subcellular location is the cell membrane. It localises to the cell junction. It is found in the focal adhesion. Integrin alpha-V:beta-6 (ITGAV:ITGB6) is a receptor for fibronectin and cytotactin. It recognizes the sequence R-G-D in its ligands. Internalization of integrin alpha-V/beta-6 via clathrin-mediated endocytosis promotes carcinoma cell invasion. ITGAV:ITGB6 acts as a receptor for fibrillin-1 (FBN1) and mediates R-G-D-dependent cell adhesion to FBN1. Integrin alpha-V:beta-6 (ITGAV:ITGB6) mediates R-G-D-dependent release of transforming growth factor beta-1 (TGF-beta-1) from regulatory Latency-associated peptide (LAP), thereby playing a key role in TGF-beta-1 activation. Functionally, (Microbial infection) Integrin ITGAV:ITGB6 acts as a receptor for Coxsackievirus A9 and Coxsackievirus B1. Its function is as follows. (Microbial infection) Integrin ITGAV:ITGB6 acts as a receptor for Herpes simplex virus-1/HHV-1. In Homo sapiens (Human), this protein is Integrin beta-6 (ITGB6).